Consider the following 332-residue polypeptide: D-amino acid oxidase (332 aa).

FAD is bound by residues Ala8, Gly9, Ile10, Thr39, Thr40, Ala45, Gly46, Leu47, Val161, and Ser180. D-proline is bound by residues Tyr218 and Arg274. Tyr218 and Arg274 together coordinate D-serine. 5 residues coordinate FAD: Arg274, Gly305, Gly306, Gly308, and Thr310. D-proline is bound at residue Gly306. A D-serine-binding site is contributed by Gly306. Residues 330–332 (AKL) carry the Microbody targeting signal motif.

The protein belongs to the DAMOX/DASOX family. The cofactor is FAD.

The protein resides in the peroxisome matrix. It carries out the reaction a D-alpha-amino acid + O2 + H2O = a 2-oxocarboxylate + H2O2 + NH4(+). It catalyses the reaction D-alanine + O2 + H2O = pyruvate + H2O2 + NH4(+). The catalysed reaction is D-arginine + O2 + H2O = 5-guanidino-2-oxopentanoate + H2O2 + NH4(+). The enzyme catalyses D-asparagine + O2 + H2O = 2-oxosuccinamate + H2O2 + NH4(+). It carries out the reaction D-cysteine + O2 + H2O = 2-oxo-3-sulfanylpropanoate + H2O2 + NH4(+). It catalyses the reaction D-glutamine + O2 + H2O = 2-oxoglutaramate + H2O2 + NH4(+). The catalysed reaction is D-isoleucine + O2 + H2O = (R)-3-methyl-2-oxopentanoate + H2O2 + NH4(+). The enzyme catalyses D-leucine + O2 + H2O = 4-methyl-2-oxopentanoate + H2O2 + NH4(+). It carries out the reaction D-lysine + O2 + H2O = 6-amino-2-oxohexanoate + H2O2 + NH4(+). It catalyses the reaction D-methionine + O2 + H2O = 4-methylsulfanyl-2-oxobutanoate + H2O2 + NH4(+). The catalysed reaction is D-phenylalanine + O2 + H2O = 3-phenylpyruvate + H2O2 + NH4(+). The enzyme catalyses D-proline + O2 = 1-pyrroline-2-carboxylate + H2O2. It carries out the reaction D-valine + O2 + H2O = 3-methyl-2-oxobutanoate + H2O2 + NH4(+). It catalyses the reaction D-histidine + O2 + H2O = 3-(imidazol-5-yl)pyruvate + H2O2 + NH4(+). The catalysed reaction is D-tyrosine + O2 + H2O = 3-(4-hydroxyphenyl)pyruvate + H2O2 + NH4(+). The enzyme catalyses D-serine + O2 + H2O = 3-hydroxypyruvate + H2O2 + NH4(+). It carries out the reaction D-threonine + O2 + H2O = (S)-3-hydroxy-2-oxobutanoate + H2O2 + NH4(+). It catalyses the reaction D-tryptophan + O2 + H2O = indole-3-pyruvate + H2O2 + NH4(+). Functionally, catalyzes the oxidative deamination of D-amino acids with broad substrate specificity. Could be responsible for the degradation of diet-derived D-alanine in the intestine. Maintains the asexual state of worms and represses early ovarian development. Following sexual induction, the enzyme is required for differentiation of oogonia into oocytes in the developing ovaries. In Dugesia ryukyuensis (Freshwater planarian flatworm), this protein is D-amino acid oxidase.